We begin with the raw amino-acid sequence, 438 residues long: Protein translocase subunit SecY (438 aa).

Residues 1-43 (MKIKPILELIPEVKRPLKGVSFKEKIQWTGLVLILYFILGTID) form a helical membrane-spanning segment. Residues 44–54 (IYMGGAEMPAM) lie on the Extracellular side of the membrane. Residues 55 to 62 (FAFWQTVT) constitute an intramembrane region (helical). A discontinuously helical transmembrane segment spans residues 55–83 (FAFWQTVTASKMGTLITLGIGPIVTAGII). The stretch at 63 to 74 (ASKMGTLITLGI) is an intramembrane region. An intramembrane region (helical) is located at residues 75-83 (GPIVTAGII). Residues 84 to 104 (MQLLVGSELISLDLSKPMNRA) lie on the Cytoplasmic side of the membrane. Residues 105 to 129 (LFQGLQKLFGIFLCFLEAVMFVGAG) traverse the membrane as a helical segment. The Extracellular portion of the chain corresponds to 130–136 (AFGVVNS). A helical transmembrane segment spans residues 137-161 (TLALILVLQLALGAILVIYLDEIVS). The Cytoplasmic portion of the chain corresponds to 162-167 (RYGIGS). The chain crosses the membrane as a helical span at residues 168–186 (GIGLFIAAGVAQTIFVGAF). Residues 187-209 (GAEGYLWKFFSAMSVGSLGIAFE) lie on the Extracellular side of the membrane. Residues 210–231 (YILPILSTLFVFLVVVYVESIR) traverse the membrane as a helical segment. At 232-256 (VEIPLAHGRVKGAVGKYPIKFIYVS) the chain is on the cytoplasmic side. Residues 257–278 (NLPVILAAALFANIQLWGMFLD) form a helical membrane-spanning segment. Topologically, residues 279 to 315 (RMGYPILGQYSNGTAVSGIAYYFSTPYGISNIISDPL) are extracellular. Residues 316-335 (HAIFYTLMMVIFCILFGLFW) form a helical membrane-spanning segment. Residues 336-378 (VETSGLDAKSMAKKLGNLDMAIKGFRKSQKSIEQRLKRYIKPI) lie on the Cytoplasmic side of the membrane. The chain crosses the membrane as a helical span at residues 379–397 (TVMGSAFVGFLAAAADFTG). Topologically, residues 398-400 (ALG) are extracellular. Residues 401–415 (GGTGVLLTVSIVYRL) traverse the membrane as a helical segment. Over 416 to 438 (YEQLVQEQLSELHPAVAKFVGKR) the chain is Cytoplasmic.

The protein belongs to the SecY/SEC61-alpha family. In terms of assembly, component of the Sec protein translocase complex. Heterotrimer consisting of alpha (SecY), beta (SecG) and gamma (SecE) subunits. The heterotrimers can form oligomers, although 1 heterotrimer is thought to be able to translocate proteins. Interacts with the ribosome. May interact with SecDF, and other proteins may be involved.

The protein resides in the cell membrane. The central subunit of the protein translocation channel SecYEG. Consists of two halves formed by TMs 1-5 and 6-10. These two domains form a lateral gate at the front which open onto the bilayer between TMs 2 and 7, and are clamped together by SecE at the back. The channel is closed by both a pore ring composed of hydrophobic SecY resides and a short helix (helix 2A) on the extracellular side of the membrane which forms a plug. The plug probably moves laterally to allow the channel to open. The ring and the pore may move independently. The chain is Protein translocase subunit SecY from Methanococcus vannielii.